Here is a 666-residue protein sequence, read N- to C-terminus: Pentatricopeptide repeat-containing protein At1g64100 (666 aa).

PPR repeat units follow at residues 105–139 (TAVDCNKVIGVFVRMNRPDVAISLYRKMEIRRIPL), 140–174 (NIYSFNILIKCFCDCHKLSFSLSTFGKLTKLGFQP), 175–209 (DVVTFNTLLHGLCLEDRISEALALFGYMVETGFLE), 225–259 (VVITFNTLINGLCLEGRVLEAAALVNKMVGKGLHI), 260–294 (DVVTYGTIVNGMCKMGDTKSALNLLSKMEETHIKP), 295–329 (DVVIYSAIIDRLCKDGHHSDAQYLFSEMLEKGIAP), 330–364 (NVFTYNCMIDGFCSFGRWSDAQRLLRDMIEREINP), 365–399 (DVLTFNALISASVKEGKLFEAEKLCDEMLHRCIFP), 400–430 (DTVTYNSMIYGFCKHNRFDDAKHMFDLMASP), 431–465 (DVVTFNTIIDVYCRAKRVDEGMQLLREISRRGLVA), 466–500 (NTTTYNTLIHGFCEVDNLNAAQDLFQEMISHGVCP), 501–535 (DTITCNILLYGFCENEKLEEALELFEVIQMSKIDL), 536–570 (DTVAYNIIIHGMCKGSKVDEAWDLFCSLPIHGVEP), 571–605 (DVQTYNVMISGFCGKSAISDANVLFHKMKDNGHEP), and 606–640 (DNSTYNTLIRGCLKAGEIDKSIELISEMRSNGFSG).

Belongs to the PPR family. P subfamily.

This chain is Pentatricopeptide repeat-containing protein At1g64100, found in Arabidopsis thaliana (Mouse-ear cress).